The sequence spans 466 residues: Cytochrome P450 85A1 (466 aa).

The chain crosses the membrane as a helical span at residues 1-21 (MVLAVLIGVLVGIVLVSSLLL). Residue C416 participates in heme binding.

It belongs to the cytochrome P450 family. The cofactor is heme.

Its subcellular location is the membrane. It carries out the reaction 6-deoxoteasterone + reduced [NADPH--hemoprotein reductase] + O2 = 6alpha-hydroxyteasterone + oxidized [NADPH--hemoprotein reductase] + H2O + H(+). The enzyme catalyses 6alpha-hydroxytyphasterol + reduced [NADPH--hemoprotein reductase] + O2 = teasterone + oxidized [NADPH--hemoprotein reductase] + 2 H2O + H(+). It catalyses the reaction 3-dehydro-6-deoxoteasterone + reduced [NADPH--hemoprotein reductase] + O2 = 3-dehydro-6alpha-hydroxyteasterone + oxidized [NADPH--hemoprotein reductase] + H2O + H(+). The catalysed reaction is 3-dehydro-6alpha-hydroxyteasterone + reduced [NADPH--hemoprotein reductase] + O2 = 3-dehydroteasterone + oxidized [NADPH--hemoprotein reductase] + 2 H2O + H(+). It carries out the reaction 6-deoxotyphasterol + reduced [NADPH--hemoprotein reductase] + O2 = 6alpha-hydroxytyphasterol + oxidized [NADPH--hemoprotein reductase] + H2O + H(+). The enzyme catalyses 6alpha-hydroxytyphasterol + reduced [NADPH--hemoprotein reductase] + O2 = typhasterol + oxidized [NADPH--hemoprotein reductase] + 2 H2O + H(+). It catalyses the reaction 6-deoxocastasterone + reduced [NADPH--hemoprotein reductase] + O2 = 6alpha-hydroxycastasterone + oxidized [NADPH--hemoprotein reductase] + H2O + H(+). The catalysed reaction is 6alpha-hydroxycastasterone + reduced [NADPH--hemoprotein reductase] + O2 = castasterone + oxidized [NADPH--hemoprotein reductase] + 2 H2O + H(+). It carries out the reaction 3-dehydro-6-deoxoteasterone + 2 reduced [NADPH--hemoprotein reductase] + 2 O2 = 3-dehydroteasterone + 2 oxidized [NADPH--hemoprotein reductase] + 3 H2O + 2 H(+). The enzyme catalyses 6-deoxocastasterone + 2 reduced [NADPH--hemoprotein reductase] + 2 O2 = castasterone + 2 oxidized [NADPH--hemoprotein reductase] + 3 H2O + 2 H(+). It catalyses the reaction 6-deoxoteasterone + 2 reduced [NADPH--hemoprotein reductase] + 2 O2 = teasterone + 2 oxidized [NADPH--hemoprotein reductase] + 3 H2O + 2 H(+). The catalysed reaction is 6-deoxotyphasterol + 2 reduced [NADPH--hemoprotein reductase] + 2 O2 = typhasterol + 2 oxidized [NADPH--hemoprotein reductase] + 3 H2O + 2 H(+). Its pathway is plant hormone biosynthesis; brassinosteroid biosynthesis. In terms of biological role, involved in reduction steps of the biosynthesis of plant campesterol-derivative steroids, ending to castasterone (CS) but missing brassinolide (BL). Catalyzes the C6-oxidation step in brassinosteroids biosynthesis; the conversion of 6-deoxoteasterone (6-deoxoTE) to teasterone (TE), 3-dehydro-6-deoxoteasterone (6-deoxo3DT, 6-deoxo-3-DHT) to 3-dehydroteasterone (3DT, 3-DHT), 6-deoxotyphasterol (6-deoxoTY) to typhasterol (TY) and of 6-deoxocastasterone (6-deoxoCS) to castasterone (CS). The protein is Cytochrome P450 85A1 of Brachypodium distachyon (Purple false brome).